The following is a 277-amino-acid chain: Large ribosomal subunit protein uL2c (277 aa).

Disordered stretches follow at residues 24–57 (IVQS…RGGG) and 226–266 (NAAD…HKYS).

The protein belongs to the universal ribosomal protein uL2 family. As to quaternary structure, part of the 50S ribosomal subunit.

It localises to the plastid. Its subcellular location is the chloroplast. The chain is Large ribosomal subunit protein uL2c (rpl2) from Zygnema circumcarinatum (Green alga).